We begin with the raw amino-acid sequence, 367 residues long: 2-aminoethylphosphonate--pyruvate transaminase (367 aa).

Lys194 is subject to N6-(pyridoxal phosphate)lysine.

It belongs to the class-V pyridoxal-phosphate-dependent aminotransferase family. PhnW subfamily. As to quaternary structure, homodimer. Pyridoxal 5'-phosphate serves as cofactor.

It catalyses the reaction (2-aminoethyl)phosphonate + pyruvate = phosphonoacetaldehyde + L-alanine. Involved in phosphonate degradation. This chain is 2-aminoethylphosphonate--pyruvate transaminase, found in Salmonella paratyphi A (strain ATCC 9150 / SARB42).